The sequence spans 321 residues: MNRPERLQPGVKLRDADKVARIPVKVVPSERETMLRKPDWLRVKLPSSNQRILEIKAALRKNGLHSVCEEASCPNLAECFNHGTATFMILGAICTRRCPFCDVAHGRPLKADADEPKKLAQTIKDMKLKYVVITSVDRDDLRDGGAQHFADCIREIRLLNPEIKIETLVPDFRGRIDAALDILATEPPDVFNHNLETAPAHYRKARPGANYQWSLDLLKRFKERHPTIPTKSGLMMGLGETNEEIAEVLRDLRAHNVEMLTLGQYLQPSKFHLPVERYVPPAEFDELKALADELGFTHAACGPLVRSSYHADLQAQGKEVK.

Residues C68, C73, C79, C94, C98, C101, and S308 each contribute to the [4Fe-4S] cluster site. The 218-residue stretch at 80-297 folds into the Radical SAM core domain; it reads FNHGTATFMI…KALADELGFT (218 aa).

The protein belongs to the radical SAM superfamily. Lipoyl synthase family. [4Fe-4S] cluster is required as a cofactor.

The protein resides in the cytoplasm. It carries out the reaction [[Fe-S] cluster scaffold protein carrying a second [4Fe-4S](2+) cluster] + N(6)-octanoyl-L-lysyl-[protein] + 2 oxidized [2Fe-2S]-[ferredoxin] + 2 S-adenosyl-L-methionine + 4 H(+) = [[Fe-S] cluster scaffold protein] + N(6)-[(R)-dihydrolipoyl]-L-lysyl-[protein] + 4 Fe(3+) + 2 hydrogen sulfide + 2 5'-deoxyadenosine + 2 L-methionine + 2 reduced [2Fe-2S]-[ferredoxin]. It functions in the pathway protein modification; protein lipoylation via endogenous pathway; protein N(6)-(lipoyl)lysine from octanoyl-[acyl-carrier-protein]: step 2/2. In terms of biological role, catalyzes the radical-mediated insertion of two sulfur atoms into the C-6 and C-8 positions of the octanoyl moiety bound to the lipoyl domains of lipoate-dependent enzymes, thereby converting the octanoylated domains into lipoylated derivatives. This is Lipoyl synthase from Shewanella frigidimarina (strain NCIMB 400).